The following is a 349-amino-acid chain: tRNA pseudouridine synthase D (349 aa).

Phe27 lines the substrate pocket. The active-site Nucleophile is the Asp80. Residue Asn129 coordinates substrate. Residues 155-303 (GVPNYFGAQR…VEAARRAMLL (149 aa)) enclose the TRUD domain. Position 329 (Phe329) interacts with substrate.

This sequence belongs to the pseudouridine synthase TruD family.

It catalyses the reaction uridine(13) in tRNA = pseudouridine(13) in tRNA. In terms of biological role, responsible for synthesis of pseudouridine from uracil-13 in transfer RNAs. This chain is tRNA pseudouridine synthase D, found in Escherichia coli O127:H6 (strain E2348/69 / EPEC).